A 353-amino-acid chain; its full sequence is Outer membrane protein P5 (353 aa).

The N-terminal stretch at 1-21 (MKKTAIALVVAGLAAASVAQA) is a signal peptide. The next 8 membrane-spanning stretches (beta stranded) occupy residues 27–37 (TFYAGVKAGQA), 58–69 (SFTYGVFGGYQI), 77–85 (LAVELGYDD), 104–115 (HGAHLSLKGSYE), 120–128 (LDVYGKAGV), 158–167 (GLFAVGAEYA), 172–179 (LAVRLEYQ), and 205–213 (SINAGISYR). Residues 227 to 353 (VVSKTFSLNS…RVEIAVNGTK (127 aa)) form the OmpA-like domain. A disulfide bridge connects residues Cys-326 and Cys-338.

It belongs to the outer membrane OOP (TC 1.B.6) superfamily. OmpA family. In terms of assembly, monomer and homodimer.

Its subcellular location is the cell outer membrane. Functionally, with TolR probably plays a role in maintaining the position of the peptidoglycan cell wall in the periplasm. Acts as a porin with low permeability that allows slow penetration of small solutes; an internal gate slows down solute passage. This is Outer membrane protein P5 from Haemophilus influenzae.